Reading from the N-terminus, the 284-residue chain is L-ribulose-5-phosphate 3-epimerase UlaE (284 aa).

Belongs to the L-ribulose-5-phosphate 3-epimerase family.

It catalyses the reaction L-ribulose 5-phosphate = L-xylulose 5-phosphate. Its pathway is cofactor degradation; L-ascorbate degradation; D-xylulose 5-phosphate from L-ascorbate: step 3/4. Functionally, catalyzes the isomerization of L-xylulose-5-phosphate to L-ribulose-5-phosphate. Is involved in the anaerobic L-ascorbate utilization. In Escherichia coli O157:H7 (strain EC4115 / EHEC), this protein is L-ribulose-5-phosphate 3-epimerase UlaE.